A 345-amino-acid polypeptide reads, in one-letter code: Protein RecA (345 aa).

Position 68–75 (68–75 (GVESSGKT)) interacts with ATP.

The protein belongs to the RecA family.

Its subcellular location is the cytoplasm. Functionally, can catalyze the hydrolysis of ATP in the presence of single-stranded DNA, the ATP-dependent uptake of single-stranded DNA by duplex DNA, and the ATP-dependent hybridization of homologous single-stranded DNAs. It interacts with LexA causing its activation and leading to its autocatalytic cleavage. In Aquifex aeolicus (strain VF5), this protein is Protein RecA.